The sequence spans 695 residues: Biosynthetic arginine decarboxylase 1 (695 aa).

The residue at position 141 (Lys141) is an N6-(pyridoxal phosphate)lysine. 332–342 (LDVGGGLGVDY) is a substrate binding site.

This sequence belongs to the Orn/Lys/Arg decarboxylase class-II family. SpeA subfamily. Requires Mg(2+) as cofactor. Pyridoxal 5'-phosphate serves as cofactor.

The enzyme catalyses L-arginine + H(+) = agmatine + CO2. Catalyzes the biosynthesis of agmatine from arginine. The polypeptide is Biosynthetic arginine decarboxylase 1 (speA1) (Synechocystis sp. (strain ATCC 27184 / PCC 6803 / Kazusa)).